The following is a 35-amino-acid chain: Anti-H(O) lectin 3 (35 aa).

This sequence belongs to the leguminous lectin family. As to quaternary structure, homodimer. Highly glycosylated.

Binds lactose or galactose. The polypeptide is Anti-H(O) lectin 3 (Ulex europaeus (Furze)).